The following is a 171-amino-acid chain: Endoribonuclease YbeY (171 aa).

Zn(2+)-binding residues include H130, H134, and H140.

It belongs to the endoribonuclease YbeY family. Requires Zn(2+) as cofactor.

Its subcellular location is the cytoplasm. Single strand-specific metallo-endoribonuclease involved in late-stage 70S ribosome quality control and in maturation of the 3' terminus of the 16S rRNA. In Neisseria meningitidis serogroup A / serotype 4A (strain DSM 15465 / Z2491), this protein is Endoribonuclease YbeY.